The chain runs to 131 residues: Con-Ins Q1b (131 aa).

Positions 1–24 (MTTSSYFLLVALGLLLYLCQSSFG) are cleaved as a signal peptide. Intrachain disulfides connect C29–C107, C41–C110, C53–C123, and C109–C114. Positions 59-92 (LQGGTDDARKKRGRASLLRKRRGFLSMLKARAKR) are cleaved as a propeptide — c peptide. E118 carries the 4-carboxyglutamate; partial modification. Residue S130 is modified to Serine amide.

This sequence belongs to the insulin family. As to quaternary structure, heterodimer of A and B chains; disulfide-linked. As to expression, expressed by the venom gland.

Its subcellular location is the secreted. Its function is as follows. This venom insulin facilitates prey capture by rapidly inducing hypoglycemic shock. Intraperitoneal injection of this peptide into zebrafish lowers blood glucose with the same potency than human insulin. In vivo, when applied to water, this peptide reduces overall locomotor activity of zebrafish larvae, observed as a significant decrease in the percentage of time spent swimming and movement frequency. This is Con-Ins Q1b from Conus quercinus (Oak cone).